The following is a 405-amino-acid chain: Imidazolonepropionase (405 aa).

Positions 70 and 72 each coordinate Fe(3+). His70 and His72 together coordinate Zn(2+). Positions 79, 142, and 175 each coordinate 4-imidazolone-5-propanoate. Residue Tyr142 coordinates N-formimidoyl-L-glutamate. Position 240 (His240) interacts with Fe(3+). Position 240 (His240) interacts with Zn(2+). Gln243 is a 4-imidazolone-5-propanoate binding site. Asp315 lines the Fe(3+) pocket. Asp315 is a binding site for Zn(2+). 2 residues coordinate N-formimidoyl-L-glutamate: Asn317 and Gly319. Residue Ser320 coordinates 4-imidazolone-5-propanoate.

The protein belongs to the metallo-dependent hydrolases superfamily. HutI family. Requires Zn(2+) as cofactor. Fe(3+) serves as cofactor.

The protein resides in the cytoplasm. The enzyme catalyses 4-imidazolone-5-propanoate + H2O = N-formimidoyl-L-glutamate. Its pathway is amino-acid degradation; L-histidine degradation into L-glutamate; N-formimidoyl-L-glutamate from L-histidine: step 3/3. In terms of biological role, catalyzes the hydrolytic cleavage of the carbon-nitrogen bond in imidazolone-5-propanoate to yield N-formimidoyl-L-glutamate. It is the third step in the universal histidine degradation pathway. This is Imidazolonepropionase from Ruegeria sp. (strain TM1040) (Silicibacter sp.).